A 98-amino-acid chain; its full sequence is AQIVKLGGDDGSLAFVPSKISVAAGEAIEFVNNAGFPHNIVFDEDAVPAGVDADAISYDDYLNSKGETVVRKLSTPGVYGVYCEPHAGAGMKMTITVQ.

One can recognise a Plastocyanin-like domain in the interval 1–98; the sequence is AQIVKLGGDD…AGMKMTITVQ (98 aa). Cu(2+)-binding residues include His38, Cys83, His86, and Met91.

It belongs to the plastocyanin family. It depends on Cu(2+) as a cofactor.

Its subcellular location is the plastid. It localises to the chloroplast thylakoid membrane. Its function is as follows. Participates in electron transfer between P700 and the cytochrome b6-f complex in photosystem I. Has antiviral activity against Potato virus Y (strain N). This Ulva pertusa (Sea lettuce) protein is Plastocyanin (PETE).